Consider the following 205-residue polypeptide: Ribosomal RNA small subunit methyltransferase G (205 aa).

S-adenosyl-L-methionine is bound by residues Gly-70, Leu-75, 121–122, and Arg-136; that span reads IE.

This sequence belongs to the methyltransferase superfamily. RNA methyltransferase RsmG family.

Its subcellular location is the cytoplasm. The enzyme catalyses guanosine(527) in 16S rRNA + S-adenosyl-L-methionine = N(7)-methylguanosine(527) in 16S rRNA + S-adenosyl-L-homocysteine. In terms of biological role, specifically methylates the N7 position of guanine in position 527 of 16S rRNA. The polypeptide is Ribosomal RNA small subunit methyltransferase G (Methylococcus capsulatus (strain ATCC 33009 / NCIMB 11132 / Bath)).